Reading from the N-terminus, the 253-residue chain is MGTILDKIVEQKKKEVATLYETYTPIKESRKTHSLVESLQQFTVIAEVKRASPSKGDINLHVDVRKQVKTYEECGAGAVSVLTDGQFFKGSFYDLQTAREESSIPLLCKDFIIDKIQIDRAYEAGADIILLIVAALPKEKLKELYSYVLEKGLEAIVEIHDEEELEIAIELNPHVIGINNRNLKTFEVDLGQTEKLGKRLNEEKLLWISESGIHSKEDIIRVKRAGAKGVLVGEALMTSSSIRTFFEDCKVNI.

This sequence belongs to the TrpC family.

The enzyme catalyses 1-(2-carboxyphenylamino)-1-deoxy-D-ribulose 5-phosphate + H(+) = (1S,2R)-1-C-(indol-3-yl)glycerol 3-phosphate + CO2 + H2O. It participates in amino-acid biosynthesis; L-tryptophan biosynthesis; L-tryptophan from chorismate: step 4/5. This chain is Indole-3-glycerol phosphate synthase, found in Bacillus cereus (strain ATCC 10987 / NRS 248).